The chain runs to 1981 residues: Nonribosomal peptide synthetase rstn8 (1981 aa).

Residues 251–638 are adenylation; the sequence is SYAALEQESA…ELGEIEYQAS (388 aa). The Carrier 1 domain maps to 763–840; the sequence is HHAGQKYDEM…ELFHRSQKTP (78 aa). An O-(pantetheine 4'-phosphoryl)serine modification is found at serine 800. Positions 883 to 1293 are condensation 1; it reads EDIYPCSPLQ…DASMGTILSQ (411 aa). In terms of domain architecture, Carrier 2 spans 1438-1514; the sequence is EPLLPLEATL…CLASTLNSRP (77 aa). An O-(pantetheine 4'-phosphoryl)serine modification is found at serine 1475. The tract at residues 1586-1978 is condensation 1; the sequence is EEQIDLVSFA…TFAQSIERII (393 aa). A disordered region spans residues 1754–1774; it reads HHHHQHEGRQHHGASETNGNR.

Belongs to the NRP synthetase family. It depends on pantetheine 4'-phosphate as a cofactor.

The catalysed reaction is 2 L-tryptophan = cyclo(L-Trp-L-Trp) + 2 H2O. It functions in the pathway alkaloid biosynthesis. In terms of biological role, nonribosomal peptide synthetase; part of the gene cluster that mediates the biosynthesis of okaramine B, a prenylated indole alkaloid that possesses an unusual octacyclic ring system, including a four-membered azetidine ring and an eight-membered azocine ring, and that exhibits insecticidal activity against silkworm larvae. Within the pathway, okaA acts as a bimodular non-ribosomal peptide synthetase (NRPS) that condenses two tryptophan molecules into cyclo(L-Trp-L-Trp). Prenylation by the prenyltransferase okaC then leads to the formation of cyclo(N8-(alpha,alpha-dimethylallyl)-L-Trp-6a-(alpha,alpha-dime-thylallyl)-L-Trp). This is followed by indole 2,3-epoxidation by the FAD-dependent monooxygenase okaB to facilitate the formation of the hexahydropyrrolo[2,3-b]indole (HPI) moiety of okaramine C. The cytochrome P450 monooxygenase okaD then likely catalyzes formation of the eight-membered ring of okaramine A. The dioxygenase okaE further forms the unusual 2-dimethyl-3-methyl-azetidine ring to yield 12-deshydroxyl okaramine E, as well as the hydroxylation of 12-deshydroxyl okaramine E to produce okaramine E. The cytochrome P450 monoxygenase okaG converts 12-deshydroxyl okaramine E into 3-desmethyl okaramine B which is further methylated by the methyltransferase okaF into okaramine B. In a shunt pathway, okaG and okaF together are also able to convert okaramine E into okaramine D. Okaramine H is produced by nonenzymatic conversion from okaramine A. The polypeptide is Nonribosomal peptide synthetase rstn8 (Penicillium ochrochloron).